A 448-amino-acid polypeptide reads, in one-letter code: Adenylosuccinate synthetase 1 (448 aa).

GTP contacts are provided by residues Gly-22–Lys-28 and Gly-50–Thr-52. Residue Asp-23 is the Proton acceptor of the active site. Residues Asp-23 and Gly-50 each coordinate Mg(2+). IMP-binding positions include Asp-23–Lys-26, Asn-48–His-51, Thr-139, Arg-153, Gln-234, Thr-249, and Arg-321. His-51 serves as the catalytic Proton donor. Ser-317–Arg-323 lines the substrate pocket. Residues Arg-323, Lys-349–Asp-351, and Ser-431–Gly-433 each bind GTP.

The protein belongs to the adenylosuccinate synthetase family. Homodimer. It depends on Mg(2+) as a cofactor.

Its subcellular location is the cytoplasm. It carries out the reaction IMP + L-aspartate + GTP = N(6)-(1,2-dicarboxyethyl)-AMP + GDP + phosphate + 2 H(+). Its pathway is purine metabolism; AMP biosynthesis via de novo pathway; AMP from IMP: step 1/2. Functionally, plays an important role in the de novo pathway of purine nucleotide biosynthesis. Catalyzes the first committed step in the biosynthesis of AMP from IMP. This chain is Adenylosuccinate synthetase 1, found in Burkholderia lata (strain ATCC 17760 / DSM 23089 / LMG 22485 / NCIMB 9086 / R18194 / 383).